A 657-amino-acid polypeptide reads, in one-letter code: Major core protein 4b (657 aa).

Positions 1–61 (MESDSNIAIE…ITEEDVISAG (61 aa)) are excised as a propeptide.

Belongs to the poxviridae protein P4b family. The precursor is cleaved to a mature protein during virion maturation. Proteolytic cleavage of major core proteins P4a (A10L), P4b (A3L), and VP8 (L4R), which occurs at a late stage of core formation, is required for production of infectious mature virions (MV).

Its subcellular location is the virion. Its function is as follows. Major component of the virion core that undergoes proteolytic processing during the immature virion (IV) to mature virion (MV) transition. Essential for the formation of a structurally normal core. This chain is Major core protein 4b, found in Vertebrata (FPV).